The sequence spans 218 residues: Protein Syd (218 aa).

Belongs to the Syd family.

The protein resides in the cell inner membrane. Interacts with the SecY protein in vivo. May bind preferentially to an uncomplexed state of SecY, thus functioning either as a chelating agent for excess SecY in the cell or as a regulatory factor that negatively controls the translocase function. The protein is Protein Syd of Shewanella denitrificans (strain OS217 / ATCC BAA-1090 / DSM 15013).